The following is a 314-amino-acid chain: Methionyl-tRNA formyltransferase (314 aa).

110 to 113 (SLLP) provides a ligand contact to (6S)-5,6,7,8-tetrahydrofolate.

Belongs to the Fmt family.

The enzyme catalyses L-methionyl-tRNA(fMet) + (6R)-10-formyltetrahydrofolate = N-formyl-L-methionyl-tRNA(fMet) + (6S)-5,6,7,8-tetrahydrofolate + H(+). Attaches a formyl group to the free amino group of methionyl-tRNA(fMet). The formyl group appears to play a dual role in the initiator identity of N-formylmethionyl-tRNA by promoting its recognition by IF2 and preventing the misappropriation of this tRNA by the elongation apparatus. This Bacillus anthracis (strain A0248) protein is Methionyl-tRNA formyltransferase.